Reading from the N-terminus, the 92-residue chain is Small ribosomal subunit protein uS19c (92 aa).

It belongs to the universal ribosomal protein uS19 family.

Its subcellular location is the plastid. It localises to the chloroplast. Its function is as follows. Protein S19 forms a complex with S13 that binds strongly to the 16S ribosomal RNA. In Chloranthus spicatus (Chulantree), this protein is Small ribosomal subunit protein uS19c.